The sequence spans 769 residues: DNA mismatch repair protein MLH1 (769 aa).

Residues 1–335 (MSLRIKALDA…IANQLHAELS (335 aa)) are DNA- and ATP-binding. Positions 422 to 441 (EGSSTKRQLSEPKVTNVSHS) are enriched in polar residues. Positions 422 to 480 (EGSSTKRQLSEPKVTNVSHSQEAEKLTLNESEQPRDANTINDNDLKDQPKKKQKLGDYK) are disordered. S441 bears the Phosphoserine; by ATM or ATR mark. Basic and acidic residues-rich tracts occupy residues 442 to 456 (QEAE…EQPR) and 464 to 478 (NDLK…KLGD). The interaction with PMS1 stretch occupies residues 501–756 (RVPKERVNVN…RHILKDVVEI (256 aa)).

This sequence belongs to the DNA mismatch repair MutL/HexB family. As to quaternary structure, heterodimer of MLH1 and PMS1, called MutLalpha, which is the major MMR MutL activity correcting base-base mismatches as well as IDLs. The heterodimer binds double strand DNA independently of a mismatch with positive cooperativity and has more than one DNA binding site. Forms a ternary complex with either the MSH2-MSH6 (MutSalpha) or the MSH2-MSH3 heterodimer (MutSbeta), which recognize and bind to mismatch DNA. Ternary complex formation is promoted by ATP binding. Heterodimer of MLH1 and MLH3, called MutLbeta, which is involved in correction of a specific subset of IDLs when associated with MutSbeta. Heterodimer of MLH1 and MLH2.

Its subcellular location is the nucleus. Required for DNA mismatch repair (MMR), correcting base-base mismatches and insertion-deletion loops (IDLs) resulting from DNA replication, DNA damage or from recombination events between non-identical sequences during meiosis. Component of different MutL heterodimers that form a ternary complex with the MutS heterodimers, which initially recognize the DNA mismatches. This complex is thought to be responsible for directing the downstream MMR events, including strand discrimination, excision, and resynthesis. Plays a major role in maintaining the genetic stability of simple sequence repeats, the repair of heteroduplex sites present in meiotic recombination intermediates, and the promotion of meiotic crossing-over. This is DNA mismatch repair protein MLH1 (MLH1) from Saccharomyces cerevisiae (strain ATCC 204508 / S288c) (Baker's yeast).